A 614-amino-acid polypeptide reads, in one-letter code: V-type proton ATPase catalytic subunit A isoform 2 (614 aa).

Residue Ser-142 is modified to Phosphoserine. Residue 247–254 (GAFGCGKT) participates in ATP binding.

Belongs to the ATPase alpha/beta chains family. In terms of assembly, V-ATPase is a heteromultimeric enzyme made up of two complexes: the ATP-hydrolytic V1 complex and the proton translocation V0 complex. The V1 complex consists of three catalytic AB heterodimers that form a heterohexamer, three peripheral stalks each consisting of EG heterodimers, one central rotor including subunits D and F, and the regulatory subunits C and H. The proton translocation complex V0 consists of the proton transport subunit a, a ring of proteolipid subunits c9c'', rotary subunit d, subunits e and f, and the accessory subunits VhaAC45 and ATP6AP2.

The catalysed reaction is ATP + H2O + 4 H(+)(in) = ADP + phosphate + 5 H(+)(out). With respect to regulation, ATP hydrolysis occurs at the interface between the nucleotide-binding domains of subunits A and B. ATP hydrolysis triggers a conformational change in the subunits D and F, which induces a shift of subunit d. The c-ring is subsequently rotated and results in a continuous proton translocation across the membrane. Its function is as follows. Catalytic subunit of the V1 complex of vacuolar(H+)-ATPase (V-ATPase), a multisubunit enzyme composed of a peripheral complex (V1) that hydrolyzes ATP and a membrane integral complex (V0) that translocates protons. V-ATPase is responsible for acidifying and maintaining the pH of intracellular compartments and in some cell types, is targeted to the plasma membrane, where it is responsible for acidifying the extracellular environment. In Drosophila melanogaster (Fruit fly), this protein is V-type proton ATPase catalytic subunit A isoform 2 (Vha68-2).